The sequence spans 129 residues: Small ribosomal subunit protein uS11 (129 aa).

It belongs to the universal ribosomal protein uS11 family. Part of the 30S ribosomal subunit. Interacts with proteins S7 and S18. Binds to IF-3.

Its function is as follows. Located on the platform of the 30S subunit, it bridges several disparate RNA helices of the 16S rRNA. Forms part of the Shine-Dalgarno cleft in the 70S ribosome. This Anoxybacillus flavithermus (strain DSM 21510 / WK1) protein is Small ribosomal subunit protein uS11.